We begin with the raw amino-acid sequence, 633 residues long: FAD-binding monooxygenase andJ (633 aa).

FAD contacts are provided by residues threonine 117–tryptophan 120, aspartate 129–threonine 130, and tyrosine 135. Methionine 127–aspartate 129 is a binding site for NADP(+). Residues threonine 269–glutamine 275 and arginine 292–threonine 293 each bind NADP(+).

It belongs to the FAD-binding monooxygenase family. Requires FAD as cofactor.

It functions in the pathway secondary metabolite biosynthesis; terpenoid biosynthesis. FAD-binding monooxygenase; part of the gene cluster that mediates the biosynthesis of anditomin, a fungal meroterpenoid. The first step of the pathway is the synthesis of 3,5-dimethylorsellinic acid (DMOA) by the polyketide synthase andM. DMOA is then converted to the phthalide compound 5,7-dihydroxy-4,6-dimethylphthalide (DHDMP) by the cytochrome P450 monooxygenase andK, which is further prenylated by the prenyltransferase andD to yield farnesyl-DHDMP. Further epoxidation by the FAD-dependent monooxygenase andE leads to epoxyfarnesyl-DHDMP. The next step involves the terpene cyclase andB that converts epoxyfarnesyl-DHDMP into preandiloid A through opening of the epoxide ring followed by the cyclization of the farnesyl moiety. Preandiloid A is in turn oxidized at the C-3 hydroxyl group to yield preandiloid B by the dehydrogenase andC. The dioxygenase andA is solely responsible for the dehydrogenation of preandiloid B leading to the enone preandiloid C, as well as for the intriguing structural rearrangement to generate the bicyclo[2.2.2]octane core, transforming preandiloid C into andiconin. FAD-binding monooxygenase andJ then produces andilesin D which is reduced by dehydrogenase andI to yield andilesin A. Action of acetyltransferase andG followed by a spontaneous acetate elimination leads then to andilesin B, which is in turn substrate of the short chain dehydrogenase andH to yield andilesin C. Finally, the dioxygenase andF catalyzes the transformation of andilesin C to anditomin. The protein is FAD-binding monooxygenase andJ of Emericella variicolor (Aspergillus stellatus).